Here is a 40-residue protein sequence, read N- to C-terminus: Cell division inhibitor MciZ (40 aa).

Interacts with FtsZ. Binds to the C-terminal polymerization interface of FtsZ. Binds to FtsZ filaments.

Highly effective in inhibiting polymerization at low and intermediate concentrations of GTP and only partially effective at high GTP concentrations. In terms of biological role, blocks Z-ring formation in the mother cell during sporulation by inhibiting the polymerization of FtsZ. Binds to the minus end of FtsZ and functions as a filament-capping protein. At high concentrations, is capable of both capping and sequestration of FtsZ. Decreases the GTPase activity of FtsZ. In Bacillus subtilis (strain 168), this protein is Cell division inhibitor MciZ.